Consider the following 290-residue polypeptide: Secreted chorismate mutase (290 aa).

The signal sequence occupies residues 1-21 (MKLSVSIFVLLAVSAFGGGSA). A KWL1-binding extensive loop region (ELR) region spans residues 117 to 140 (VVLSRDTVLDKPVVGKGIFPIGRR). 2 N-linked (GlcNAc...) asparagine glycosylation sites follow: N159 and N208.

As to quaternary structure, homodimer. Forms a heterodimer with the host cytosolic chorismate mutase CM2. Interacts with the host kiwellin KWL1 which acts as a defense protein that protects maize from infection.

Its subcellular location is the secreted. It is found in the host cytoplasm. The protein localises to the host cytosol. It carries out the reaction chorismate = prephenate. Contrary to classical chorismate mutases, CMU1 is not subject to allosteric regulation by tryptophan and tyrosine. Activity is decreased in a non-competitive and allosteric manner by the binding of the host defense kiwellin KWL1 which probably blocks substrate access to the active site of CMU1. Secreted chorismate mutase that is one component of a cocktail of effectors shaping the host metabolome and acting as virulence factors. The enzyme is taken up by plant cells, can spread to neighboring cells where it affects the biosynthesis of the plant immune signal salicylic acid by channelling chorismate into the phenylpropanoid pathway. Interferes with the activity of host cytosolic chorismate mutase CM2 through heterodimerization. In Mycosarcoma maydis (Corn smut fungus), this protein is Secreted chorismate mutase (CMU1).